We begin with the raw amino-acid sequence, 184 residues long: Photosystem I assembly protein Ycf4 (184 aa).

2 consecutive transmembrane segments (helical) span residues 22–42 (FCWA…GTSS) and 57–77 (IIFF…LFIS).

Belongs to the Ycf4 family.

The protein localises to the plastid. It localises to the chloroplast thylakoid membrane. Its function is as follows. Seems to be required for the assembly of the photosystem I complex. The sequence is that of Photosystem I assembly protein Ycf4 from Crucihimalaya wallichii (Rock-cress).